We begin with the raw amino-acid sequence, 238 residues long: 1-(5-phosphoribosyl)-5-[(5-phosphoribosylamino)methylideneamino] imidazole-4-carboxamide isomerase (238 aa).

The active-site Proton acceptor is Asp8. Asp130 (proton donor) is an active-site residue.

This sequence belongs to the HisA/HisF family.

The protein localises to the cytoplasm. The enzyme catalyses 1-(5-phospho-beta-D-ribosyl)-5-[(5-phospho-beta-D-ribosylamino)methylideneamino]imidazole-4-carboxamide = 5-[(5-phospho-1-deoxy-D-ribulos-1-ylimino)methylamino]-1-(5-phospho-beta-D-ribosyl)imidazole-4-carboxamide. The protein operates within amino-acid biosynthesis; L-histidine biosynthesis; L-histidine from 5-phospho-alpha-D-ribose 1-diphosphate: step 4/9. The protein is 1-(5-phosphoribosyl)-5-[(5-phosphoribosylamino)methylideneamino] imidazole-4-carboxamide isomerase of Methanococcus maripaludis (strain C6 / ATCC BAA-1332).